We begin with the raw amino-acid sequence, 369 residues long: Cytochrome P450 monooxygenase apf8 (369 aa).

C303 serves as a coordination point for heme.

The protein belongs to the cytochrome P450 family. It depends on heme as a cofactor.

It functions in the pathway secondary metabolite biosynthesis. Functionally, cytochrome P450 monooxygenase; part of the gene cluster that mediates the biosynthesis of the cyclic tetrapeptide apicidin F (APF). The non-ribosomal peptide synthetase apf1 incorporates four different amino acids to produce apicidin F: L-phenylalanine, D-pipecolic acid (D-pip), N-methoxy-L-tryptophan and L-2-aminooctanedioic acid. L-Phenylalanine is the only proteinogenic amino acid directly used by apf1. The 3 other apf1 substrates are non-proteinogenic and have to be modified by other enzymes of the cluster. Lysine is converted to delta-1-pyrroline-5-carboxylate (P5C) which is reduced to L-pipecolic acid (L-pip) by apf3. L-pip is epimerized to D-pip, probably by apf1 activity, prior to incorporation. L-Tryptophan is N-oxidyzed by one of the cytochrome P450 monooxygenases (apf7 or apf8), and further methylated at the hydroxy group by the O-methyltransferase apf6 to yield N-methoxy-L-tryptophan. The synthesis of the fourth apf1 substrate is more complex. The fatty acid synthase apf5 is involved in the synthesis of the octanoic acid backbone of L-2-aminooctanedioic acid by fixing one acetyl-CoA unit and three malonyl-CoA units. Then one of the cytochrome P450 monooxygenases (apf7 or apf8) may oxidize this backbone to 2-oxooctanoic acid. The aminotransferase apf4 is predicted to catalyze the exchange of the keto group with an amino group. The next step would be the oxidation of 2-aminooctanoic acid by one of the cytochrome P450 monooxygenases (apf7 or apf8). The last step is the oxidation of 2-amino-8-hydroxyoctanoic acid to 2-aminooctanedioic acid is catalyzed by the FAD-dependent monooxygenase apf9. The sequence is that of Cytochrome P450 monooxygenase apf8 from Gibberella fujikuroi (strain CBS 195.34 / IMI 58289 / NRRL A-6831) (Bakanae and foot rot disease fungus).